The chain runs to 261 residues: Kallikrein 1-related peptidase b8 (261 aa).

The N-terminal stretch at 1–18 (MRFLILFLALSLGGIDAA) is a signal peptide. A propeptide spans 19 to 24 (PPLQSR) (activation peptide). A Peptidase S1 domain is found at 25-258 (VVGGFNCEKN…FNSWIKDTMT (234 aa)). 5 cysteine pairs are disulfide-bonded: cysteine 31–cysteine 173, cysteine 50–cysteine 66, cysteine 152–cysteine 219, cysteine 184–cysteine 198, and cysteine 209–cysteine 234. The active-site Charge relay system is the histidine 65. N-linked (GlcNAc...) asparagine glycosylation is present at asparagine 102. Catalysis depends on aspartate 120, which acts as the Charge relay system. Residue serine 213 is the Charge relay system of the active site.

The protein belongs to the peptidase S1 family. Kallikrein subfamily.

The enzyme catalyses Preferential cleavage of Arg-|-Xaa bonds in small molecule substrates. Highly selective action to release kallidin (lysyl-bradykinin) from kininogen involves hydrolysis of Met-|-Xaa or Leu-|-Xaa.. Its function is as follows. Glandular kallikreins cleave Met-Lys and Arg-Ser bonds in kininogen to release Lys-bradykinin. This is Kallikrein 1-related peptidase b8 (Klk1b8) from Mus musculus (Mouse).